Consider the following 159-residue polypeptide: Transcription elongation factor GreA (159 aa).

Residues 14–76 (IKKLENELEY…QLENMLKNAS (63 aa)) adopt a coiled-coil conformation.

This sequence belongs to the GreA/GreB family.

In terms of biological role, necessary for efficient RNA polymerase transcription elongation past template-encoded arresting sites. The arresting sites in DNA have the property of trapping a certain fraction of elongating RNA polymerases that pass through, resulting in locked ternary complexes. Cleavage of the nascent transcript by cleavage factors such as GreA or GreB allows the resumption of elongation from the new 3'terminus. GreA releases sequences of 2 to 3 nucleotides. The polypeptide is Transcription elongation factor GreA (Clostridium kluyveri (strain NBRC 12016)).